Here is a 546-residue protein sequence, read N- to C-terminus: G1/S-specific cyclin CLN1 (546 aa).

A disordered region spans residues 224 to 265; sequence SNGKEWSCKRKSQSSDDSDATVEEHISSSPQSTGLDGDTTTM.

It belongs to the cyclin family.

Essential for the control of the cell cycle at the G1/S (start) transition. Interacts with the CDC28 protein kinase to form MPF. In Saccharomyces cerevisiae (strain ATCC 204508 / S288c) (Baker's yeast), this protein is G1/S-specific cyclin CLN1 (CLN1).